A 1196-amino-acid polypeptide reads, in one-letter code: Chromosome partition protein Smc (1196 aa).

An ATP-binding site is contributed by 32–39; sequence PNGSGKSN. Coiled-coil stretches lie at residues 168–288 and 327–497; these read LKHR…SVQQ and DALE…LERK. One can recognise an SMC hinge domain in the interval 510 to 621; it reads AGILGPMAKL…VDDLDRALAL (112 aa). 2 coiled-coil regions span residues 654 to 829 and 972 to 1026; these read LEVT…RAQQ and DRPT…KDLL.

This sequence belongs to the SMC family. In terms of assembly, homodimer.

Its subcellular location is the cytoplasm. Required for chromosome condensation and partitioning. This is Chromosome partition protein Smc from Mycolicibacterium paratuberculosis (strain ATCC BAA-968 / K-10) (Mycobacterium paratuberculosis).